Consider the following 262-residue polypeptide: tRNA pseudouridine synthase A (262 aa).

Asp51 serves as the catalytic Nucleophile. Residue Tyr109 coordinates substrate.

Belongs to the tRNA pseudouridine synthase TruA family. Homodimer.

It carries out the reaction uridine(38/39/40) in tRNA = pseudouridine(38/39/40) in tRNA. Its function is as follows. Formation of pseudouridine at positions 38, 39 and 40 in the anticodon stem and loop of transfer RNAs. The protein is tRNA pseudouridine synthase A of Aliivibrio salmonicida (strain LFI1238) (Vibrio salmonicida (strain LFI1238)).